We begin with the raw amino-acid sequence, 603 residues long: UvrABC system protein C (603 aa).

Positions 15–92 constitute a GIY-YIG domain; it reads DKPGCYLMKN…IQKHQPYFNI (78 aa). Positions 197-232 constitute a UVR domain; the sequence is ATVKRQLTKKMQRAAENMEFERAAEIRDQLHYIEVT.

It belongs to the UvrC family. In terms of assembly, interacts with UvrB in an incision complex.

The protein resides in the cytoplasm. Its function is as follows. The UvrABC repair system catalyzes the recognition and processing of DNA lesions. UvrC both incises the 5' and 3' sides of the lesion. The N-terminal half is responsible for the 3' incision and the C-terminal half is responsible for the 5' incision. The protein is UvrABC system protein C of Limosilactobacillus reuteri (strain DSM 20016) (Lactobacillus reuteri).